A 597-amino-acid chain; its full sequence is ATP-dependent RNA helicase DBP9 (597 aa).

The short motif at 17 to 45 is the Q motif element; that stretch reads ISFESLQLDTRLLQAIKRNGFKNPTLIQS. The region spanning 49–235 is the Helicase ATP-binding domain; sequence PLALQEKRDI…KEFCRAPAIL (187 aa). 62-69 provides a ligand contact to ATP; that stretch reads AATGCGKT. The DEAD box signature appears at 181-184; it reads DEVD. The region spanning 248-477 is the Helicase C-terminal domain; that stretch reads KLIQYYVKTS…PYSFDTKQIE (230 aa). A compositionally biased stretch (acidic residues) spans 340–354; the sequence is EEDEENDDEIETNSE. Disordered stretches follow at residues 340–373, 521–540, and 561–597; these read EEDE…GKKA, PQEL…RVQQ, and VGFV…KNFK. Composition is skewed to basic and acidic residues over residues 355 to 367 and 526 to 535; these read EQDK…DTKD and SLRHDKELHP. Over residues 568–587 the composition is skewed to basic residues; the sequence is SVKKSNRHKKNNKVFKKRSG.

The protein belongs to the DEAD box helicase family. DDX56/DBP9 subfamily.

It localises to the nucleus. It is found in the nucleolus. It catalyses the reaction ATP + H2O = ADP + phosphate + H(+). Functionally, ATP-binding RNA helicase involved in the biogenesis of 60S ribosomal subunits and is required for the normal formation of 25S and 5.8S rRNAs. This is ATP-dependent RNA helicase DBP9 (DBP9) from Vanderwaltozyma polyspora (strain ATCC 22028 / DSM 70294 / BCRC 21397 / CBS 2163 / NBRC 10782 / NRRL Y-8283 / UCD 57-17) (Kluyveromyces polysporus).